The following is a 415-amino-acid chain: Serine hydroxymethyltransferase (415 aa).

(6S)-5,6,7,8-tetrahydrofolate-binding positions include Leu117 and 121-123; that span reads GHL. At Lys226 the chain carries N6-(pyridoxal phosphate)lysine. (6S)-5,6,7,8-tetrahydrofolate is bound at residue Glu241.

Belongs to the SHMT family. As to quaternary structure, homodimer. It depends on pyridoxal 5'-phosphate as a cofactor.

It is found in the cytoplasm. It carries out the reaction (6R)-5,10-methylene-5,6,7,8-tetrahydrofolate + glycine + H2O = (6S)-5,6,7,8-tetrahydrofolate + L-serine. It functions in the pathway one-carbon metabolism; tetrahydrofolate interconversion. Its pathway is amino-acid biosynthesis; glycine biosynthesis; glycine from L-serine: step 1/1. Catalyzes the reversible interconversion of serine and glycine with tetrahydrofolate (THF) serving as the one-carbon carrier. This reaction serves as the major source of one-carbon groups required for the biosynthesis of purines, thymidylate, methionine, and other important biomolecules. Also exhibits THF-independent aldolase activity toward beta-hydroxyamino acids, producing glycine and aldehydes, via a retro-aldol mechanism. The polypeptide is Serine hydroxymethyltransferase (Bacillus subtilis (strain 168)).